The sequence spans 115 residues: NADH-ubiquinone oxidoreductase chain 3 (115 aa).

A run of 3 helical transmembrane segments spans residues 3-23 (IMLT…IAFW), 55-75 (FFLV…LLPL), and 86-106 (TMLT…AYEW).

This sequence belongs to the complex I subunit 3 family. In terms of assembly, core subunit of respiratory chain NADH dehydrogenase (Complex I) which is composed of 45 different subunits. Interacts with TMEM186. Interacts with TMEM242.

It is found in the mitochondrion inner membrane. It catalyses the reaction a ubiquinone + NADH + 5 H(+)(in) = a ubiquinol + NAD(+) + 4 H(+)(out). Functionally, core subunit of the mitochondrial membrane respiratory chain NADH dehydrogenase (Complex I) which catalyzes electron transfer from NADH through the respiratory chain, using ubiquinone as an electron acceptor. Essential for the catalytic activity of complex I. This Sus scrofa (Pig) protein is NADH-ubiquinone oxidoreductase chain 3.